Consider the following 243-residue polypeptide: PF03932 family protein CutC (243 aa).

Belongs to the CutC family.

It localises to the cytoplasm. In Histophilus somni (strain 2336) (Haemophilus somnus), this protein is PF03932 family protein CutC.